The chain runs to 141 residues: Large ribosomal subunit protein uL11 (141 aa).

It belongs to the universal ribosomal protein uL11 family. Part of the ribosomal stalk of the 50S ribosomal subunit. Interacts with L10 and the large rRNA to form the base of the stalk. L10 forms an elongated spine to which L12 dimers bind in a sequential fashion forming a multimeric L10(L12)X complex. Post-translationally, one or more lysine residues are methylated.

Functionally, forms part of the ribosomal stalk which helps the ribosome interact with GTP-bound translation factors. This chain is Large ribosomal subunit protein uL11, found in Oceanobacillus iheyensis (strain DSM 14371 / CIP 107618 / JCM 11309 / KCTC 3954 / HTE831).